The primary structure comprises 550 residues: Proteasome-associated ATPase (550 aa).

Residues 9–48 are a coiled coil; the sequence is EELARRVASLSAQNERLAQILVEARSKIVGLQQQIDDLAQ. 233–238 lines the ATP pocket; that stretch reads GCGKTL. The segment at 528-550 is disordered; sequence KGEGKNPTPAKAIETPHNTGPYL. The interval 549–550 is docks into pockets in the proteasome alpha-ring; that stretch reads YL.

It belongs to the AAA ATPase family. In terms of assembly, homohexamer. Assembles into a hexameric ring structure that caps the 20S proteasome core. Strongly interacts with the prokaryotic ubiquitin-like protein Pup through a hydrophobic interface; the interacting region of ARC lies in its N-terminal coiled-coil domain. There is one Pup binding site per ARC hexamer ring. Upon ATP-binding, the C-terminus of ARC interacts with the alpha-rings of the proteasome core, possibly by binding to the intersubunit pockets.

It participates in protein degradation; proteasomal Pup-dependent pathway. Functionally, ATPase which is responsible for recognizing, binding, unfolding and translocation of pupylated proteins into the bacterial 20S proteasome core particle. May be essential for opening the gate of the 20S proteasome via an interaction with its C-terminus, thereby allowing substrate entry and access to the site of proteolysis. Thus, the C-termini of the proteasomal ATPase may function like a 'key in a lock' to induce gate opening and therefore regulate proteolysis. This Jonesia denitrificans (strain ATCC 14870 / DSM 20603 / BCRC 15368 / CIP 55.134 / JCM 11481 / NBRC 15587 / NCTC 10816 / Prevot 55134) (Listeria denitrificans) protein is Proteasome-associated ATPase.